A 104-amino-acid chain; its full sequence is Iron-sulfur cluster assembly protein CyaY (104 aa).

The protein belongs to the frataxin family.

Functionally, involved in iron-sulfur (Fe-S) cluster assembly. May act as a regulator of Fe-S biogenesis. The polypeptide is Iron-sulfur cluster assembly protein CyaY (Aeromonas salmonicida (strain A449)).